Reading from the N-terminus, the 414-residue chain is Glucose-6-phosphate isomerase (414 aa).

Glutamate 266 acts as the Proton donor in catalysis. Catalysis depends on residues histidine 292 and lysine 405.

The protein belongs to the GPI family.

It is found in the cytoplasm. The catalysed reaction is alpha-D-glucose 6-phosphate = beta-D-fructose 6-phosphate. Its pathway is carbohydrate biosynthesis; gluconeogenesis. The protein operates within carbohydrate degradation; glycolysis; D-glyceraldehyde 3-phosphate and glycerone phosphate from D-glucose: step 2/4. Catalyzes the reversible isomerization of glucose-6-phosphate to fructose-6-phosphate. This chain is Glucose-6-phosphate isomerase, found in Thermus thermophilus (strain ATCC BAA-163 / DSM 7039 / HB27).